Reading from the N-terminus, the 820-residue chain is Phenylalanine--tRNA ligase beta subunit (820 aa).

Positions 42 to 154 constitute a tRNA-binding domain; the sequence is KGGLEGLVIG…EDAVPGTLAK (113 aa). The B5 domain occupies 413–489; that stretch reads AQDFIVELTY…RIYGYNNVEI (77 aa). 4 residues coordinate Mg(2+): D467, D473, E476, and D477. Residues 727–820 form the FDX-ACB domain; sequence SKFPAVKRDL…LEDKLGAKLR (94 aa).

Belongs to the phenylalanyl-tRNA synthetase beta subunit family. Type 1 subfamily. Tetramer of two alpha and two beta subunits. Mg(2+) is required as a cofactor.

It is found in the cytoplasm. The enzyme catalyses tRNA(Phe) + L-phenylalanine + ATP = L-phenylalanyl-tRNA(Phe) + AMP + diphosphate + H(+). This Bacteroides fragilis (strain ATCC 25285 / DSM 2151 / CCUG 4856 / JCM 11019 / LMG 10263 / NCTC 9343 / Onslow / VPI 2553 / EN-2) protein is Phenylalanine--tRNA ligase beta subunit.